A 718-amino-acid chain; its full sequence is MKQLFATTSRGFEELLKVELTDLGAQECRVVQGGVHFIANDETQYRILLWSRLSSRILLPLITTKIYSDLDLYSAIVGQNWLTHFDERVTFLVDFNGTNREIRHTQFGAMRVKDGIVDYFERHGKTRPNVDKEYPDIRIHAYLNQDELVVSLDLSGEALHLRGYREDTGKAPLRETLAAAIVLRSSWEKGTPLVDPMCGSGTLLIEAAQMEAQIAPQLHRLHWGFDFWKGHNQVVWEKVKQEAVELAEQAFNRKLTPHFWGFDLDHRVLKKAQKNAQNAGVSHLIKWQQGDVAGLKNPTEQEIGTVICNPPYGERLGTTPALIALYSVFGRQLKTEFADWNVSIFSGEPALLDCLRLRAYRQFKAKNGPLDCVQKNYHIAVRKQVESAVENSQEKTLTFVSENTQVAQDFANRLRKNIKKIDKWANQQKLDAYRLYDADLPEYNLAVDRYADHIIVQEYAAPKNVDENKARQRLLDAVSAILLVTGIETNKLILKVRQKQKGTSQYEKLANKGEYFYVHEYGAKLWVNLTDYLDTGLFLDHRLTRKMLGEMAVGKDFLNLFAYTGSATVHAALGLAKSTTTVDMSNTYLNWAEQNLLLNDIEGKQHKLIQADCLQWLNKCDRQFDLIFVDPPTFSNSKRMEDSWDVQRDHIKLMANLKRILRTNGTIVFSNNKRGFKMDIDGLQELELSAVEISAKTLPLDFERNKQIHNCWIIRHQS.

The THUMP domain maps to 43–154 (TQYRILLWSR…QDELVVSLDL (112 aa)).

This sequence belongs to the methyltransferase superfamily. RlmKL family.

It localises to the cytoplasm. The catalysed reaction is guanosine(2445) in 23S rRNA + S-adenosyl-L-methionine = N(2)-methylguanosine(2445) in 23S rRNA + S-adenosyl-L-homocysteine + H(+). It carries out the reaction guanosine(2069) in 23S rRNA + S-adenosyl-L-methionine = N(2)-methylguanosine(2069) in 23S rRNA + S-adenosyl-L-homocysteine + H(+). Specifically methylates the guanine in position 2445 (m2G2445) and the guanine in position 2069 (m7G2069) of 23S rRNA. This is Ribosomal RNA large subunit methyltransferase K/L from Histophilus somni (strain 129Pt) (Haemophilus somnus).